A 306-amino-acid chain; its full sequence is Ornithine carbamoyltransferase (306 aa).

Carbamoyl phosphate-binding positions include 53–56 (STRT), Q80, R104, and 131–134 (HPCQ). L-ornithine is bound by residues N162, D219, and 223-224 (SM). Residues 259–260 (CL) and R287 each bind carbamoyl phosphate.

Belongs to the aspartate/ornithine carbamoyltransferase superfamily. OTCase family.

The protein resides in the cytoplasm. It carries out the reaction carbamoyl phosphate + L-ornithine = L-citrulline + phosphate + H(+). Its pathway is amino-acid biosynthesis; L-arginine biosynthesis; L-arginine from L-ornithine and carbamoyl phosphate: step 1/3. Functionally, reversibly catalyzes the transfer of the carbamoyl group from carbamoyl phosphate (CP) to the N(epsilon) atom of ornithine (ORN) to produce L-citrulline. This is Ornithine carbamoyltransferase from Psychrobacter sp. (strain PRwf-1).